A 167-amino-acid polypeptide reads, in one-letter code: MAKLEAQQKDDLQEKLIAVNRVSKVVKGGRIFSFTALTVVGDGNGKIGYGYGKAREVPAAIQKAMEKARRNIVTVELNAGTLHHPVKGRHTGSLVYMQPASQGTGIIAGGAMRAVLEVAGVHNVLSKAYGSTNPINIVRATVDALVHMKSPSQIAAKRGLNVDEIRG.

One can recognise an S5 DRBM domain in the interval 12–75; sequence LQEKLIAVNR…EKARRNIVTV (64 aa).

It belongs to the universal ribosomal protein uS5 family. Part of the 30S ribosomal subunit. Contacts proteins S4 and S8.

In terms of biological role, with S4 and S12 plays an important role in translational accuracy. Its function is as follows. Located at the back of the 30S subunit body where it stabilizes the conformation of the head with respect to the body. The protein is Small ribosomal subunit protein uS5 of Shewanella baltica (strain OS223).